The primary structure comprises 237 residues: Protein GrpE (237 aa).

Disordered stretches follow at residues 1-52 and 200-237; these read MSGD…RLQQ and KVSM…QPGV. Positions 27–40 are enriched in polar residues; the sequence is ASINSDEGQSSAQS. The segment covering 204 to 218 has biased composition (low complexity); sequence GPGPQSGASPSSAQP.

Belongs to the GrpE family. Homodimer.

The protein resides in the cytoplasm. Participates actively in the response to hyperosmotic and heat shock by preventing the aggregation of stress-denatured proteins, in association with DnaK and GrpE. It is the nucleotide exchange factor for DnaK and may function as a thermosensor. Unfolded proteins bind initially to DnaJ; upon interaction with the DnaJ-bound protein, DnaK hydrolyzes its bound ATP, resulting in the formation of a stable complex. GrpE releases ADP from DnaK; ATP binding to DnaK triggers the release of the substrate protein, thus completing the reaction cycle. Several rounds of ATP-dependent interactions between DnaJ, DnaK and GrpE are required for fully efficient folding. The protein is Protein GrpE of Prochlorococcus marinus (strain MIT 9313).